Reading from the N-terminus, the 218-residue chain is Ribose-5-phosphate isomerase A (218 aa).

Residues 28 to 31 (SGST), 81 to 84 (DGAD), and 94 to 97 (KGKG) contribute to the substrate site. Catalysis depends on Glu103, which acts as the Proton acceptor. Lys121 provides a ligand contact to substrate.

This sequence belongs to the ribose 5-phosphate isomerase family. In terms of assembly, homodimer.

It catalyses the reaction aldehydo-D-ribose 5-phosphate = D-ribulose 5-phosphate. It functions in the pathway carbohydrate degradation; pentose phosphate pathway; D-ribose 5-phosphate from D-ribulose 5-phosphate (non-oxidative stage): step 1/1. Its function is as follows. Catalyzes the reversible conversion of ribose-5-phosphate to ribulose 5-phosphate. The sequence is that of Ribose-5-phosphate isomerase A from Wigglesworthia glossinidia brevipalpis.